Consider the following 402-residue polypeptide: Sorting nexin 1 (402 aa).

Residues 1-10 (MESTEQPRNI) are compositionally biased toward polar residues. Residues 1 to 25 (MESTEQPRNISGSMQSPRSPSSHPY) form a disordered region. Positions 11–24 (SGSMQSPRSPSSHP) are enriched in low complexity. Ser16 carries the phosphoserine modification. A PX domain is found at 24–143 (PYLSVSVTDP…TFLQADEETM (120 aa)). A 1,2-diacyl-sn-glycero-3-phospho-(1D-myo-inositol-3-phosphate) is bound by residues Arg67, Lys93, and Arg109. One can recognise a BAR domain in the interval 160–402 (LMQMFRDVQS…LPKLEASYSV (243 aa)).

This sequence belongs to the sorting nexin family. Homodimer. Heterodimer with SNX2A or SNX2B. Component of the retromer complex which consists of VPS29 (MAG1), VPS26 (VPS26A or VPS26B), VPS35 (VPS35A or VPS35B or VPS35C), VPS5/17 (SNX1 or SNX2A or SNX2B). Interacts with BLOS1 and BLOS2. In terms of tissue distribution, ubiquitously expressed.

It is found in the cytoplasm. Its subcellular location is the endosome membrane. It localises to the prevacuolar compartment membrane. The protein resides in the golgi apparatus. The protein localises to the trans-Golgi network membrane. Plays a role in vesicular protein sorting. Acts at the crossroads between the secretory and endocytic pathways. Is involved in the endosome to vacuole protein transport via its interaction with the BLOS1/2 proteins and, as component of the membrane-associated retromer complex, is also involved in endosome-to-Golgi retrograde transport. Required for the auxin-carrier protein PIN2 sorting to the lytic vacuolar pathway and the trafficking of several plasma membrane proteins. Also involved in the efficient sorting of seed storage protein globulin 12S. The protein is Sorting nexin 1 (SNX1) of Arabidopsis thaliana (Mouse-ear cress).